An 869-amino-acid chain; its full sequence is MAEVSIEKLAADIGTSVDRLVKQFKDADIVKAANENVTEDEKRQLLDYLSKQHGGTGSEAPKRMTLQRKTTSTLNMGKSKAVTVEVRKKRTYVKRTDVEEARLAEEETARALAEQQAQLEAEKAAAEEAKKAAEEKAKKAAESKAKAEAERLARAEKAKKEAEARQAEESALSPEEKAEQERVRTEAENIRKKQEQESQRKLEEDAKKAADEARKLAEENSRRWKEEEERRKKQEAEEVHVHSNRYAQEAEDADDIKIERGGRRRKKSKRNAGSDLKHAFNKPAQPVERIVRLGETITVSDLASKLAIKATEVIKAMMKMGEMATINQVLDQETAVLVVEEMGHKYELVNDNALEDELLADKISSELASRAPVVTIMGHVDHGKTSLLDYIRRAKVAAGEAGGITQHIGAYSVETDNGRIAFLDTPGHAAFTAMRARGATATDIVILVVAADDGVMPQTKEAVQHSKAAGVPLIVAVNKMDKESADPDRVKTELSQLEVISEEWGGEHQFVNVSAKTGEGIDALLEAISLQAELLDLKAPPTGSAKGIVIESRLDKGRGPVASVLVQEGQLKAGDILLCGIEYGRVRAMRDENGKDVAIAGPSTPVEVLGLSGVPVAGEDALVVQDERKAREVATKRNAKQREIKLAKQQKAKLENMFANMEAGDVSELNIVLKADVQGSVEAISDSLTKLSTSEVKVNIVGSGVGGITETDASLAAASSAIVVGFNVRADASARRVIEAEEIDLRYYSVIYSLIDEVKMAMTGMLAPEFKQEIIGLAEVRDVFKSPKLGAIAGCMVVEGTIKRSNPIRVLRENVVIYEGELESLRRFKDDVQEVRNGVECGIGVKNYNDVKVGDQIEVFEIVQVEREL.

Disordered stretches follow at residues 51–78 (KQHG…NMGK) and 105–277 (EEET…SDLK). Residues 67 to 76 (QRKTTSTLNM) are compositionally biased toward polar residues. The segment covering 110–119 (RALAEQQAQL) has biased composition (low complexity). The span at 120–241 (EAEKAAAEEA…KKQEAEEVHV (122 aa)) shows a compositional bias: basic and acidic residues. The 174-residue stretch at 369–542 (SRAPVVTIMG…ELLDLKAPPT (174 aa)) folds into the tr-type G domain. Positions 378-385 (GHVDHGKT) are G1. 378–385 (GHVDHGKT) contacts GTP. The interval 403–407 (GITQH) is G2. Residues 424–427 (DTPG) form a G3 region. GTP contacts are provided by residues 424–428 (DTPGH) and 478–481 (NKMD). Residues 478 to 481 (NKMD) form a G4 region. Residues 514-516 (SAK) form a G5 region.

This sequence belongs to the TRAFAC class translation factor GTPase superfamily. Classic translation factor GTPase family. IF-2 subfamily.

Its subcellular location is the cytoplasm. In terms of biological role, one of the essential components for the initiation of protein synthesis. Protects formylmethionyl-tRNA from spontaneous hydrolysis and promotes its binding to the 30S ribosomal subunits. Also involved in the hydrolysis of GTP during the formation of the 70S ribosomal complex. This Pseudoalteromonas atlantica (strain T6c / ATCC BAA-1087) protein is Translation initiation factor IF-2.